The following is a 404-amino-acid chain: Probable homogentisate phytyltransferase 1, chloroplastic (404 aa).

The transit peptide at 1 to 77 directs the protein to the chloroplast; it reads MDSLRLRPSL…SHHRIPHRPT (77 aa). The disordered stretch occupies residues 68–96; that stretch reads SHHRIPHRPTSSSADASGQPLQSSAEAHD. Residues 76–92 are compositionally biased toward polar residues; that stretch reads PTSSSADASGQPLQSSA. Helical transmembrane passes span 119-139, 144-164, 184-204, 216-238, 245-265, 282-302, 325-345, 348-368, and 382-402; these read TVIGTALSIVSVSLLAVENLS, LFLTGLLEAVVAALFMNIYIV, LASGEYSPATGVALVSAFAAM, PLFLALFISFILGTAYSINLPFL, VVAALCILAVRAVIVQLAFFL, LIFATAFMTFFSVVIALFKDI, VFWICVGLLEMAYCVAILMGA, ACLWSKYATVVGHAILAAILW, and ITSFYMFIWKLFYAEYLLIPL.

It belongs to the UbiA prenyltransferase family.

It localises to the plastid. Its subcellular location is the chloroplast thylakoid membrane. The enzyme catalyses phytyl diphosphate + homogentisate + H(+) = 2-methyl-6-phytyl-1,4-benzene-1,4-diol + CO2 + diphosphate. It functions in the pathway cofactor biosynthesis; tocopherol biosynthesis. Its function is as follows. Involved in the synthesis of tocopherol (vitamin E). Catalyzes the condensation of homogentisate and phytyl diphosphate to form dimethylphytylhydroquinone. This is Probable homogentisate phytyltransferase 1, chloroplastic (HPT1) from Oryza sativa subsp. japonica (Rice).